A 955-amino-acid chain; its full sequence is Iron-responsive element-binding protein 2 (955 aa).

[4Fe-4S] cluster is bound by residues Cys504, Cys570, and Cys573.

This sequence belongs to the aconitase/IPM isomerase family. Requires [4Fe-4S] cluster as cofactor. Post-translationally, ubiquitinated and degraded by the proteasome in presence of high level of iron and oxygen.

The protein resides in the cytoplasm. RNA-binding protein that binds to iron-responsive elements (IRES), which are stem-loop structures found in the 5'-UTR of ferritin, and delta aminolevulinic acid synthase mRNAs, and in the 3'-UTR of transferrin receptor mRNA. Binding to the IRE element in ferritin results in the repression of its mRNA translation. Binding of the protein to the transferrin receptor mRNA inhibits the degradation of this otherwise rapidly degraded mRNA. In Xenopus laevis (African clawed frog), this protein is Iron-responsive element-binding protein 2 (ireb2).